We begin with the raw amino-acid sequence, 308 residues long: 2-methylisocitrate lyase (308 aa).

Substrate is bound at residue 54-56 (SGG). The Mg(2+) site is built by aspartate 94 and aspartate 96. Residues 131–132 (CG), arginine 166, glutamate 196, 224–226 (NIT), arginine 255, and arginine 284 each bind substrate.

The protein belongs to the isocitrate lyase/PEP mutase superfamily. Methylisocitrate lyase family. Homotetramer; dimer of dimers. Requires Mg(2+) as cofactor.

The enzyme catalyses (2S,3R)-3-hydroxybutane-1,2,3-tricarboxylate = pyruvate + succinate. It participates in organic acid metabolism; propanoate degradation. Functionally, involved in the catabolism of short chain fatty acids (SCFA) via the 2-methylcitrate cycle I (propionate degradation route). Catalyzes the thermodynamically favored C-C bond cleavage reaction of (2R,3S)-2-methylisocitrate to yield pyruvate and succinate via an alpha-carboxy-carbanion intermediate. This is 2-methylisocitrate lyase from Vibrio cholerae serotype O1 (strain ATCC 39315 / El Tor Inaba N16961).